The sequence spans 264 residues: Proteasome assembly chaperone 2 (264 aa).

Thr137 is modified (phosphothreonine).

Belongs to the PSMG2 family. Forms a heterodimer with PSMG1. The PSMG1-PSMG2 heterodimer interacts directly with the PSMA5 and PSMA7 proteasome alpha subunits. Degraded by the proteasome upon completion of 20S proteasome maturation.

Its subcellular location is the nucleus. Its function is as follows. Chaperone protein which promotes assembly of the 20S proteasome as part of a heterodimer with PSMG1. The PSMG1-PSMG2 heterodimer binds to the PSMA5 and PSMA7 proteasome subunits, promotes assembly of the proteasome alpha subunits into the heteroheptameric alpha ring and prevents alpha ring dimerization. This chain is Proteasome assembly chaperone 2, found in Bos taurus (Bovine).